The sequence spans 447 residues: Asparagine--tRNA ligase (447 aa).

The protein belongs to the class-II aminoacyl-tRNA synthetase family. In terms of assembly, homodimer.

The protein resides in the cytoplasm. It carries out the reaction tRNA(Asn) + L-asparagine + ATP = L-asparaginyl-tRNA(Asn) + AMP + diphosphate + H(+). The polypeptide is Asparagine--tRNA ligase (Lactococcus lactis subsp. lactis (strain IL1403) (Streptococcus lactis)).